The chain runs to 317 residues: 4-hydroxy-3-methylbut-2-enyl diphosphate reductase (317 aa).

Residue C12 participates in [4Fe-4S] cluster binding. (2E)-4-hydroxy-3-methylbut-2-enyl diphosphate is bound by residues H41 and H74. The dimethylallyl diphosphate site is built by H41 and H74. 2 residues coordinate isopentenyl diphosphate: H41 and H74. C97 is a [4Fe-4S] cluster binding site. H125 contributes to the (2E)-4-hydroxy-3-methylbut-2-enyl diphosphate binding site. H125 is a binding site for dimethylallyl diphosphate. H125 provides a ligand contact to isopentenyl diphosphate. E127 serves as the catalytic Proton donor. T168 is a (2E)-4-hydroxy-3-methylbut-2-enyl diphosphate binding site. C198 serves as a coordination point for [4Fe-4S] cluster. (2E)-4-hydroxy-3-methylbut-2-enyl diphosphate contacts are provided by S226, S227, N228, and S270. Dimethylallyl diphosphate is bound by residues S226, S227, N228, and S270. Residues S226, S227, N228, and S270 each coordinate isopentenyl diphosphate.

Belongs to the IspH family. In terms of assembly, homodimer. It depends on [4Fe-4S] cluster as a cofactor.

It carries out the reaction isopentenyl diphosphate + 2 oxidized [2Fe-2S]-[ferredoxin] + H2O = (2E)-4-hydroxy-3-methylbut-2-enyl diphosphate + 2 reduced [2Fe-2S]-[ferredoxin] + 2 H(+). The enzyme catalyses dimethylallyl diphosphate + 2 oxidized [2Fe-2S]-[ferredoxin] + H2O = (2E)-4-hydroxy-3-methylbut-2-enyl diphosphate + 2 reduced [2Fe-2S]-[ferredoxin] + 2 H(+). It participates in isoprenoid biosynthesis; dimethylallyl diphosphate biosynthesis; dimethylallyl diphosphate from (2E)-4-hydroxy-3-methylbutenyl diphosphate: step 1/1. The protein operates within isoprenoid biosynthesis; isopentenyl diphosphate biosynthesis via DXP pathway; isopentenyl diphosphate from 1-deoxy-D-xylulose 5-phosphate: step 6/6. Functionally, catalyzes the conversion of 1-hydroxy-2-methyl-2-(E)-butenyl 4-diphosphate (HMBPP) into a mixture of isopentenyl diphosphate (IPP) and dimethylallyl diphosphate (DMAPP). Acts in the terminal step of the DOXP/MEP pathway for isoprenoid precursor biosynthesis. The polypeptide is 4-hydroxy-3-methylbut-2-enyl diphosphate reductase (Yersinia pseudotuberculosis serotype O:1b (strain IP 31758)).